Reading from the N-terminus, the 349-residue chain is DNA replication and repair protein RecF (349 aa).

Residue 30-37 (GKNGSGKT) coordinates ATP.

This sequence belongs to the RecF family.

Its subcellular location is the cytoplasm. Its function is as follows. The RecF protein is involved in DNA metabolism; it is required for DNA replication and normal SOS inducibility. RecF binds preferentially to single-stranded, linear DNA. It also seems to bind ATP. In Francisella tularensis subsp. tularensis (strain FSC 198), this protein is DNA replication and repair protein RecF.